The primary structure comprises 191 residues: ECF RNA polymerase sigma-E factor (191 aa).

The binds RNAP core stretch occupies residues 1-153 (MSEQLTDQVL…MAITLRELDG (153 aa)). Residues 25-92 (LVVRYQHKVA…KNYLVAQGRR (68 aa)) are sigma-70 factor domain-2. The Polymerase core binding signature appears at 48 to 61 (DVVQESFIKAYRAL). The sigma-70 factor domain-4 stretch occupies residues 129 to 180 (QIVFRTIESLPEDLRMAITLRELDGLSYEEIAAIMDCPVGTVRSRIFRAREA). The segment at residues 156 to 175 (YEEIAAIMDCPVGTVRSRIF) is a DNA-binding region (H-T-H motif).

Belongs to the sigma-70 factor family. ECF subfamily. In terms of assembly, interacts transiently with the RNAP catalytic core formed by RpoA, RpoB, RpoC and RpoZ (2 alpha, 1 beta, 1 beta' and 1 omega subunit) to form the RNAP holoenzyme that can initiate transcription. Interacts 1:1 with anti-sigma-E factor RseA which prevents binding to RNAP catalytic core.

The protein resides in the cytoplasm. With respect to regulation, ECF sigma-E is held in an inactive form by its cognate anti-sigma factor (RseA) until released by regulated intramembrane proteolysis (RIP). RIP occurs when an extracytoplasmic signal (periplasmic, acid or heat stress) triggers a concerted proteolytic cascade to transmit information and elicit cellular responses. In S.typhimurium there are 2 cascades, the heat shock response which depends on DegS and RseP, and acid response which depends only on RseP. The anti-sigma factor RseA is an inner membrane protein, binding sigma-E in the cytoplasm and RseB in the periplasm. RseA is first cut extracytoplasmically (site-1 protease, S1P, by DegS), then within the membrane itself (site-2 protease, S2P, by RseP), while cytoplasmic proteases (predominantly ClpX-ClpP) finish degrading the regulatory protein, liberating sigma-E. Degradation of RseA requires 2 signals to activate DegS; an outer membrane protein (OMP) signal activates DegS, while an LPS signal causes release of RseB from RseA, freeing RseA to be cleaved. OMP stress can be abrogated by overexpression of the sRNA rybB. Sigma factors are initiation factors that promote the attachment of RNA polymerase (RNAP) to specific initiation sites and are then released. Extracytoplasmic function (ECF) sigma-E controls the envelope stress response, responding to periplasmic protein stress, increased levels of periplasmic lipopolysaccharide (LPS) as well as acid stress, heat shock and oxidative stress; it controls protein processing in the extracytoplasmic compartment. This chain is ECF RNA polymerase sigma-E factor (rpoE), found in Salmonella typhimurium (strain 14028s / SGSC 2262).